A 201-amino-acid chain; its full sequence is Recombination protein RecR (201 aa).

A C4-type zinc finger spans residues Cys57–Cys72. Positions Gly81–Pro176 constitute a Toprim domain.

The protein belongs to the RecR family.

May play a role in DNA repair. It seems to be involved in an RecBC-independent recombinational process of DNA repair. It may act with RecF and RecO. The sequence is that of Recombination protein RecR from Shigella boydii serotype 4 (strain Sb227).